A 226-amino-acid chain; its full sequence is Leucyl/phenylalanyl-tRNA--protein transferase (226 aa).

The protein belongs to the L/F-transferase family.

Its subcellular location is the cytoplasm. It carries out the reaction N-terminal L-lysyl-[protein] + L-leucyl-tRNA(Leu) = N-terminal L-leucyl-L-lysyl-[protein] + tRNA(Leu) + H(+). It catalyses the reaction N-terminal L-arginyl-[protein] + L-leucyl-tRNA(Leu) = N-terminal L-leucyl-L-arginyl-[protein] + tRNA(Leu) + H(+). The enzyme catalyses L-phenylalanyl-tRNA(Phe) + an N-terminal L-alpha-aminoacyl-[protein] = an N-terminal L-phenylalanyl-L-alpha-aminoacyl-[protein] + tRNA(Phe). Functionally, functions in the N-end rule pathway of protein degradation where it conjugates Leu, Phe and, less efficiently, Met from aminoacyl-tRNAs to the N-termini of proteins containing an N-terminal arginine or lysine. The protein is Leucyl/phenylalanyl-tRNA--protein transferase of Pseudomonas entomophila (strain L48).